The sequence spans 252 residues: tRNA pseudouridine synthase A (252 aa).

Catalysis depends on Asp54, which acts as the Nucleophile. Position 113 (Tyr113) interacts with substrate.

Belongs to the tRNA pseudouridine synthase TruA family. In terms of assembly, homodimer.

The catalysed reaction is uridine(38/39/40) in tRNA = pseudouridine(38/39/40) in tRNA. Formation of pseudouridine at positions 38, 39 and 40 in the anticodon stem and loop of transfer RNAs. This chain is tRNA pseudouridine synthase A, found in Bacteroides fragilis (strain ATCC 25285 / DSM 2151 / CCUG 4856 / JCM 11019 / LMG 10263 / NCTC 9343 / Onslow / VPI 2553 / EN-2).